We begin with the raw amino-acid sequence, 307 residues long: Dof zinc finger protein DOF5.4 (307 aa).

Residues 51–105 form a Dof-type zinc finger; it reads LKCPRCNSLNTKFCYYNNYNLSQPRHFCKNCRRYWTKGGVLRNVPVGGGCRKAKR. Positions 53, 56, 78, and 81 each coordinate Zn(2+). The tract at residues 96 to 147 is disordered; that stretch reads VGGGCRKAKRSKTKQVPSSSSADKPTTTQDDHHVEEKSSTGSHSSSESSSLT. Positions 109–123 are enriched in polar residues; the sequence is KQVPSSSSADKPTTT. The span at 124-133 shows a compositional bias: basic and acidic residues; sequence QDDHHVEEKS. The span at 134 to 147 shows a compositional bias: low complexity; it reads STGSHSSSESSSLT.

It is found in the nucleus. Transcription factor that binds specifically to a 5'-AA[AG]G-3' consensus core sequence. Enhances the DNA binding of OBF transcription factors to OCS elements. The sequence is that of Dof zinc finger protein DOF5.4 (DOF5.4) from Arabidopsis thaliana (Mouse-ear cress).